The following is a 142-amino-acid chain: uncharacterized protein (142 aa).

Residues 18 to 137 (QSSGYSCGPA…KIFTGNVLVV (120 aa)) form the Peptidase C39 domain.

This is an uncharacterized protein from Methanothermobacter marburgensis (strain ATCC BAA-927 / DSM 2133 / JCM 14651 / NBRC 100331 / OCM 82 / Marburg) (Methanobacterium thermoautotrophicum).